We begin with the raw amino-acid sequence, 758 residues long: 5-methyltetrahydropteroyltriglutamate--homocysteine methyltransferase (758 aa).

Residues 17 to 20 and K117 contribute to the 5-methyltetrahydropteroyltri-L-glutamate site; that span reads RELK. L-homocysteine is bound by residues 434–436 and E487; that span reads IGS. L-methionine contacts are provided by residues 434–436 and E487; that span reads IGS. Residues 518-519 and W564 each bind 5-methyltetrahydropteroyltri-L-glutamate; that span reads RC. An L-homocysteine-binding site is contributed by D602. D602 provides a ligand contact to L-methionine. E608 is a 5-methyltetrahydropteroyltri-L-glutamate binding site. H644, C646, and E668 together coordinate Zn(2+). Residue H697 is the Proton donor of the active site. Zn(2+) is bound at residue C729.

The protein belongs to the vitamin-B12 independent methionine synthase family. Zn(2+) serves as cofactor.

The enzyme catalyses 5-methyltetrahydropteroyltri-L-glutamate + L-homocysteine = tetrahydropteroyltri-L-glutamate + L-methionine. The protein operates within amino-acid biosynthesis; L-methionine biosynthesis via de novo pathway; L-methionine from L-homocysteine (MetE route): step 1/1. Its function is as follows. Catalyzes the transfer of a methyl group from 5-methyltetrahydrofolate to homocysteine resulting in methionine formation. The chain is 5-methyltetrahydropteroyltriglutamate--homocysteine methyltransferase from Yersinia pestis (strain Pestoides F).